The following is a 518-amino-acid chain: Probable G-protein coupled receptor Mth-like 2 (518 aa).

The N-terminal stretch at 1-26 (MIASSKMLLSASILIYFLLNLQSSSA) is a signal peptide. Over 27 to 220 (EIADCSFYDT…CLILPSRTGQ (194 aa)) the chain is Extracellular. 5 disulfides stabilise this stretch: C31–C85, C87–C92, C96–C190, C97–C108, and C152–C211. Residue N47 is glycosylated (N-linked (GlcNAc...) asparagine). Residues N111, N125, and N201 are each glycosylated (N-linked (GlcNAc...) asparagine). A helical membrane pass occupies residues 221–241 (TVVMITSLICLVLTIAVYLCV). Residues 242–250 (KKLMNLEGK) are Cytoplasmic-facing. The helical transmembrane segment at 251–271 (CFICYMMCLFFGYLFLLLDLW) threads the bilayer. Residues 272 to 279 (ELSLDFCK) lie on the Extracellular side of the membrane. The helical transmembrane segment at 280 to 300 (AAGFLGYFFVMAAFFWLSIIS) threads the bilayer. Residues 301-321 (RHYWKCLTNPCASMNIRSERA) lie on the Cytoplasmic side of the membrane. A helical membrane pass occupies residues 322 to 342 (FLLYSCFAWAMPLALTGVTYL). At 343–371 (ADNVVNNEEWQPRVGDEGHCWIYTKSWSA) the chain is on the extracellular side. The chain crosses the membrane as a helical span at residues 372-392 (MVYFYGPMVLLILFNITMFVL). Residues 393-426 (TAKHIIDSKRTLRKIARNEGRIQKLNSDKQNYTQ) lie on the Cytoplasmic side of the membrane. A helical transmembrane segment spans residues 427–447 (FLLLFTVMGMSWSFEIFSYLV). The Extracellular segment spans residues 448-455 (QREKLWVN). Residues 456–476 (IFLVADYFNWSQGVIIFVLFI) form a helical membrane-spanning segment. Topologically, residues 477-518 (LRRKTLVLFKKQIFPKQRAFSRSATQSTIESISQTKRHFNMT) are cytoplasmic.

It belongs to the G-protein coupled receptor 2 family. Mth subfamily.

The protein localises to the cell membrane. In Drosophila melanogaster (Fruit fly), this protein is Probable G-protein coupled receptor Mth-like 2 (mthl2).